Here is a 617-residue protein sequence, read N- to C-terminus: Phosphatidylinositol-3,5-bisphosphate 3-phosphatase MTMR6 (617 aa).

The region spanning 1–101 (MEHIRTTKVE…YNSLLQLSKQ (101 aa)) is the GRAM domain. The segment at 2-141 (EHIRTTKVEQ…AEYERMGVPN (140 aa)) is interaction with RAB1B. A Phosphotyrosine modification is found at Tyr-108. A Myotubularin phosphatase domain is found at 124 to 499 (GWQLIDLAAE…FNFKFWRNMY (376 aa)). 3 residues coordinate a 1,2-diacyl-sn-glycero-3-phospho-(1D-myo-inositol-3,5-bisphosphate): Asn-248, Asn-273, and Ile-274. Residues Asn-248, Asn-273, and Ile-274 each contribute to the a 1,2-diacyl-sn-glycero-3-phospho-(1D-myo-inositol-3-phosphate) site. The active-site Phosphocysteine intermediate is Cys-336. Ser-337, Asp-338, Gly-339, Trp-340, Asp-341, Arg-342, Lys-378, and Arg-382 together coordinate a 1,2-diacyl-sn-glycero-3-phospho-(1D-myo-inositol-3,5-bisphosphate). Residues Ser-337, Asp-338, Gly-339, Trp-340, Asp-341, and Arg-342 each coordinate a 1,2-diacyl-sn-glycero-3-phospho-(1D-myo-inositol-3-phosphate). Residue Arg-382 participates in a 1,2-diacyl-sn-glycero-3-phospho-(1D-myo-inositol-3-phosphate) binding. Phosphoserine occurs at positions 557, 585, and 607.

This sequence belongs to the protein-tyrosine phosphatase family. Non-receptor class myotubularin subfamily. In terms of assembly, homodimer. Heterodimer (via C-terminus) with MTMR9 (via C-terminus). Interacts with ALKBH4. Interacts with KCNN4. Interacts (via GRAM domain) with RAB1B (in GDP-bound form); the interaction regulates MTMR6 recruitment to the endoplasmic reticulum-Golgi intermediate compartment. Isoform 1: Ubiquitously expressed including in heart, brain, spleen, lung, liver, muscle, kidney and testis (at protein level). Isoform 2: Expressed in testis (at protein level).

The protein resides in the cytoplasm. The protein localises to the endoplasmic reticulum-Golgi intermediate compartment. It is found in the cell projection. It localises to the ruffle membrane. Its subcellular location is the endoplasmic reticulum. It carries out the reaction a 1,2-diacyl-sn-glycero-3-phospho-(1D-myo-inositol-3,5-bisphosphate) + H2O = a 1,2-diacyl-sn-glycero-3-phospho-(1D-myo-inositol-5-phosphate) + phosphate. The enzyme catalyses a 1,2-diacyl-sn-glycero-3-phospho-(1D-myo-inositol-3-phosphate) + H2O = a 1,2-diacyl-sn-glycero-3-phospho-(1D-myo-inositol) + phosphate. It catalyses the reaction 1,2-dioctanoyl-sn-glycero-3-phospho-(1D-myo-inositol-3,5-bisphosphate) + H2O = 1,2-dioctanoyl-sn-glycero-3-phospho-(1D-myo-inositol-5-phosphate) + phosphate. The catalysed reaction is 1,2-dioctanoyl-sn-glycero-3-phospho-(1-D-myo-inositol-3-phosphate) + H2O = 1,2-dioctanoyl-sn-glycero-3-phospho-(1D-myo-inositol) + phosphate. Allosterically activated by phosphatidylserine and/or phosphatidylinositol 4-phosphate (PtdIns(4)P), and phosphatidylinositol 5-phosphate (PtdIns(5)P). Interaction with MTMR9 increases catalytic activity towards phosphatidylinositol 3,5-bisphosphate. Its function is as follows. Lipid phosphatase that specifically dephosphorylates the D-3 position of phosphatidylinositol 3-phosphate and phosphatidylinositol 3,5-bisphosphate, generating phosphatidylinositol and phosphatidylinositol 5-phosphate. Binds with high affinity to phosphatidylinositol 3,5-bisphosphate (PtdIns(3,5)P2) but also to phosphatidylinositol 3-phosphate (PtdIns(3)P), phosphatidylinositol 4-phosphate (PtdIns(4)P), and phosphatidylinositol 5-phosphate (PtdIns(5)P), phosphatidic acid and phosphatidylserine. Negatively regulates ER-Golgi protein transport. Probably in association with MTMR9, plays a role in the late stages of macropinocytosis by dephosphorylating phosphatidylinositol 3-phosphate in membrane ruffles. Acts as a negative regulator of KCNN4/KCa3.1 channel activity in CD4(+) T-cells possibly by decreasing intracellular levels of phosphatidylinositol 3-phosphate. Negatively regulates proliferation of reactivated CD4(+) T-cells. In complex with MTMR9, negatively regulates DNA damage-induced apoptosis. The formation of the MTMR6-MTMR9 complex stabilizes both MTMR6 and MTMR9 protein levels. In Mus musculus (Mouse), this protein is Phosphatidylinositol-3,5-bisphosphate 3-phosphatase MTMR6.